The sequence spans 664 residues: CRISPR-associated DNA-binding protein Cas12m (664 aa).

The segment at 1-137 (MKRVTITIDG…AKYRELIGSD (137 aa)) is recognition domain (REC1-N). The segment at 138–212 (EETAQMDTEI…AAKDRIRAAG (75 aa)) is recognition domain (REC2). Positions 213 to 270 (NDIENLEKDRQAAVIKAYNNSGLWWGNYNAVLESYKKARIKALKDGAELKYHRFDGSG) are recognition domain (REC1-C). The interval 271–390 (RFTNQIQGGM…VWSVVFTFTT (120 aa)) is wedge domain (WED). Residues 391–404 (DCPTYDQRSSTGNR) are linker. The interval 405–618 (CGLNLGWKKQ…KNGTQIEQVS (214 aa)) is ruvC-I. The tract at residues 618-650 (STASSATCSACKGKMEQVDGIMWRCRECRALVD) is target nucleic-acid binding (TNB). Residues C625, C628, C642, and C645 each coordinate Zn(2+). Residues 651–664 (QDINAAANLFREVL) are ruvC-II. D652 contacts Mg(2+).

Belongs to the CRISPR-associated DNA-binding protein Cas12m family. Requires Mg(2+) as cofactor. It depends on Zn(2+) as a cofactor.

CRISPR (clustered regularly interspaced short palindromic repeat), is an adaptive immune system that provides protection against mobile genetic elements (viruses, transposable elements and conjugative plasmids). CRISPR clusters contain sequences complementary to antecedent mobile elements and target invading nucleic acids. CRISPR clusters are transcribed and processed into CRISPR RNA (crRNA). Recognizes a short motif in the CRISPR repeat sequences (the 5' PAM or protospacer adjacent motif, 5'-CCN-3' in this organism) to help distinguish self versus nonself, as targets within the bacterial CRISPR locus do not have PAMs. Cas12m-crRNA binds DNA in a PAM-dependent, crRNA-guided fashion. DNA-binding probably inhibits transcription, leading to gene silencing. Upon expression in E.coli as a CRISPR region preferentially binds to its associated crRNA. Probably required for pre-crRNA processing to mature crRNA. This is CRISPR-associated DNA-binding protein Cas12m from Pelobacter propionicus (strain DSM 2379 / NBRC 103807 / OttBd1).